A 273-amino-acid polypeptide reads, in one-letter code: Large ribosomal subunit protein uL2 (273 aa).

Disordered stretches follow at residues 30–50 (YAPLLDTKSKTGGRNNFGRIT) and 221–273 (RGTA…RRGK). Residues 253–273 (KGKKTRHNKRTDKFIVRRRGK) show a composition bias toward basic residues.

This sequence belongs to the universal ribosomal protein uL2 family. In terms of assembly, part of the 50S ribosomal subunit. Forms a bridge to the 30S subunit in the 70S ribosome.

Functionally, one of the primary rRNA binding proteins. Required for association of the 30S and 50S subunits to form the 70S ribosome, for tRNA binding and peptide bond formation. It has been suggested to have peptidyltransferase activity; this is somewhat controversial. Makes several contacts with the 16S rRNA in the 70S ribosome. This Pasteurella multocida (strain Pm70) protein is Large ribosomal subunit protein uL2.